A 492-amino-acid chain; its full sequence is Phosphatidylglycerol--prolipoprotein diacylglyceryl transferase (492 aa).

Helical transmembrane passes span 40-60, 72-92, 106-126, 133-153, 184-204, 214-234, 361-381, 409-429, and 441-461; these read IFGI…YVGW, AIRQ…VVVP, VAVR…VGLA, AGLG…GGLL, QGGL…LIAL, IGDV…LGCL, VWGT…VLLI, GVLM…LEWI, and LSIS…TLFI. R230 serves as a coordination point for a 1,2-diacyl-sn-glycero-3-phospho-(1'-sn-glycerol).

Belongs to the Lgt family.

It localises to the cell inner membrane. The catalysed reaction is L-cysteinyl-[prolipoprotein] + a 1,2-diacyl-sn-glycero-3-phospho-(1'-sn-glycerol) = an S-1,2-diacyl-sn-glyceryl-L-cysteinyl-[prolipoprotein] + sn-glycerol 1-phosphate + H(+). It functions in the pathway protein modification; lipoprotein biosynthesis (diacylglyceryl transfer). Catalyzes the transfer of the diacylglyceryl group from phosphatidylglycerol to the sulfhydryl group of the N-terminal cysteine of a prolipoprotein, the first step in the formation of mature lipoproteins. The polypeptide is Phosphatidylglycerol--prolipoprotein diacylglyceryl transferase (Rhodopirellula baltica (strain DSM 10527 / NCIMB 13988 / SH1)).